A 110-amino-acid polypeptide reads, in one-letter code: Nucleoid-associated protein KPN78578_04440 (110 aa).

Belongs to the YbaB/EbfC family. As to quaternary structure, homodimer.

It localises to the cytoplasm. The protein resides in the nucleoid. Binds to DNA and alters its conformation. May be involved in regulation of gene expression, nucleoid organization and DNA protection. In Klebsiella pneumoniae subsp. pneumoniae (strain ATCC 700721 / MGH 78578), this protein is Nucleoid-associated protein KPN78578_04440.